A 1338-amino-acid polypeptide reads, in one-letter code: ABC-type transporter kk1G (1338 aa).

The segment at 1 to 21 (MSAIELPPLRSRSEEAARAEH) is disordered. Over residues 11 to 21 (SRSEEAARAEH) the composition is skewed to basic and acidic residues. A run of 6 helical transmembrane segments spans residues 75-95 (YFLI…MPLM), 130-150 (LYIF…MLAI), 203-223 (HFAT…VALV), 230-250 (LIAS…FPPF), 312-332 (TMSP…WFGI), and 340-360 (ISSV…VMNI). In terms of domain architecture, ABC transmembrane type-1 1 spans 80-372 (LCCFTSIGAG…VASPIISIAK (293 aa)). Positions 405-706 (ITFINVAFSY…GDGVYYGLVH (302 aa)) constitute an ABC transporter 1 domain. An ATP-binding site is contributed by 440–447 (GPSGSGKS). 2 disordered regions span residues 473–518 (EIPS…TCTG) and 715–747 (EDDD…HASR). Helical transmembrane passes span 777–797 (VCCI…YIFA), 816–836 (FWAG…YLLG), 895–917 (MSMA…VYGW), 919–941 (LSLV…RTRL), 1003–1023 (IIFA…FWYG), and 1037–1057 (FFIV…WFSF). One can recognise an ABC transmembrane type-1 2 domain in the interval 777-1063 (VCCIGILGAG…WFSFTPSMAQ (287 aa)). The 238-residue stretch at 1096–1333 (IEFQHVSFKY…KGVYWQMCQA (238 aa)) folds into the ABC transporter 2 domain. 1130-1137 (GSSGCGKS) is an ATP binding site.

Belongs to the ABC transporter superfamily. ABCB family. Multidrug resistance exporter (TC 3.A.1.201) subfamily.

It is found in the cell membrane. It participates in secondary metabolite biosynthesis. Its function is as follows. ABC transporter; part of the gene cluster that mediates the biosynthesis of KK-1, a novel cyclic depsipeptide with 10 residues which is a promising active compound with high activity against many plant pathogens, especially Botrytis cinerea. Is probably directly involved in the secretion of KK-1 and thus confers self-tolerance against KK-1. This Curvularia clavata protein is ABC-type transporter kk1G.